A 542-amino-acid polypeptide reads, in one-letter code: CTP synthase (542 aa).

The interval 1–264 (MKFIFITGGV…AKLIINKLKL (264 aa)) is amidoligase domain. Residue Ser-12 coordinates CTP. UTP is bound at residue Ser-12. 13-18 (SLGKGI) is an ATP binding site. L-glutamine is bound at residue Tyr-53. Residue Asp-70 coordinates ATP. Residues Asp-70 and Glu-138 each contribute to the Mg(2+) site. CTP is bound by residues 145–147 (DIE), 185–190 (KTKPTQ), and Lys-221. UTP-binding positions include 185 to 190 (KTKPTQ) and Lys-221. 237–239 (KDA) is a binding site for ATP. The 244-residue stretch at 298–541 (YIMLKDAYTS…VKSALDKKLK (244 aa)) folds into the Glutamine amidotransferase type-1 domain. Gly-359 contacts L-glutamine. The active-site Nucleophile; for glutamine hydrolysis is the Cys-386. L-glutamine is bound by residues 387–390 (LGMQ), Glu-410, and Arg-467. Active-site residues include His-514 and Glu-516.

It belongs to the CTP synthase family. In terms of assembly, homotetramer.

The enzyme catalyses UTP + L-glutamine + ATP + H2O = CTP + L-glutamate + ADP + phosphate + 2 H(+). It catalyses the reaction L-glutamine + H2O = L-glutamate + NH4(+). It carries out the reaction UTP + NH4(+) + ATP = CTP + ADP + phosphate + 2 H(+). The protein operates within pyrimidine metabolism; CTP biosynthesis via de novo pathway; CTP from UDP: step 2/2. Allosterically activated by GTP, when glutamine is the substrate; GTP has no effect on the reaction when ammonia is the substrate. The allosteric effector GTP functions by stabilizing the protein conformation that binds the tetrahedral intermediate(s) formed during glutamine hydrolysis. Inhibited by the product CTP, via allosteric rather than competitive inhibition. In terms of biological role, catalyzes the ATP-dependent amination of UTP to CTP with either L-glutamine or ammonia as the source of nitrogen. Regulates intracellular CTP levels through interactions with the four ribonucleotide triphosphates. The sequence is that of CTP synthase from Methanococcus aeolicus (strain ATCC BAA-1280 / DSM 17508 / OCM 812 / Nankai-3).